Consider the following 203-residue polypeptide: Small ribosomal subunit protein uS2 (203 aa).

The protein belongs to the universal ribosomal protein uS2 family.

This Methanoregula boonei (strain DSM 21154 / JCM 14090 / 6A8) protein is Small ribosomal subunit protein uS2.